The following is a 276-amino-acid chain: Adenylyl-sulfate kinase 1, chloroplastic (276 aa).

The N-terminal 38 residues, 1-38 (MIAAGAKSLLGLSMASPKGIFDSNSMSNSRSVVVVRAC), are a transit peptide targeting the chloroplast. The interval 46–74 (TLSHNKNGSIPEVKSINGHTGQKQGPLST) is disordered. Positions 62–74 (NGHTGQKQGPLST) are enriched in polar residues. 108–116 (GLSGSGKST) lines the ATP pocket. Substrate is bound by residues Asp138, Arg141, Arg155, Asn158, 181–182 (IS), and Gly231. Ser182 functions as the Phosphoserine intermediate in the catalytic mechanism.

It belongs to the APS kinase family. In terms of assembly, homodimer; disulfide-linked. Interacts with APK2. In terms of tissue distribution, expressed in root vasculature, root tips, leaf epidermal and guard cells, pollen grains and funiculus of developing seeds.

It is found in the plastid. The protein resides in the chloroplast. It carries out the reaction adenosine 5'-phosphosulfate + ATP = 3'-phosphoadenylyl sulfate + ADP + H(+). The protein operates within sulfur metabolism; hydrogen sulfide biosynthesis; sulfite from sulfate: step 2/3. Catalyzes the synthesis of activated sulfate. Essential for plant reproduction and viability. Required for the production of glucosinolates. This chain is Adenylyl-sulfate kinase 1, chloroplastic (APK1), found in Arabidopsis thaliana (Mouse-ear cress).